The sequence spans 280 residues: Putative pyruvate, phosphate dikinase regulatory protein (280 aa).

153 to 160 (GISRTSKT) contacts ADP.

It belongs to the pyruvate, phosphate/water dikinase regulatory protein family. PDRP subfamily.

The catalysed reaction is N(tele)-phospho-L-histidyl/L-threonyl-[pyruvate, phosphate dikinase] + ADP = N(tele)-phospho-L-histidyl/O-phospho-L-threonyl-[pyruvate, phosphate dikinase] + AMP + H(+). It carries out the reaction N(tele)-phospho-L-histidyl/O-phospho-L-threonyl-[pyruvate, phosphate dikinase] + phosphate + H(+) = N(tele)-phospho-L-histidyl/L-threonyl-[pyruvate, phosphate dikinase] + diphosphate. Its function is as follows. Bifunctional serine/threonine kinase and phosphorylase involved in the regulation of the pyruvate, phosphate dikinase (PPDK) by catalyzing its phosphorylation/dephosphorylation. The protein is Putative pyruvate, phosphate dikinase regulatory protein of Bartonella quintana (strain Toulouse) (Rochalimaea quintana).